The following is a 144-amino-acid chain: Granulocyte-macrophage colony-stimulating factor (144 aa).

The N-terminal stretch at 1–17 (MWLQNLLFLNTVVCSIS) is a signal peptide. Residues Ser-22 and Ser-24 are each glycosylated (O-linked (GalNAc...) serine). Thr-27 carries an O-linked (GalNAc...) threonine glycan. N-linked (GlcNAc...) asparagine glycosylation is found at Asn-44, Asn-45, and Asn-54. 2 disulfide bridges follow: Cys-71–Cys-113 and Cys-105–Cys-138.

This sequence belongs to the GM-CSF family. As to quaternary structure, monomer. The signaling GM-CSF receptor complex is a dodecamer of two head-to-head hexamers of two alpha, two beta, and two ligand subunits.

The protein resides in the secreted. Functionally, cytokine that stimulates the growth and differentiation of hematopoietic precursor cells from various lineages, including granulocytes, macrophages, eosinophils and erythrocytes. The polypeptide is Granulocyte-macrophage colony-stimulating factor (CSF2) (Felis catus (Cat)).